The chain runs to 124 residues: uncharacterized protein (124 aa).

The first 21 residues, 1-21, serve as a signal peptide directing secretion; that stretch reads MFLLSLLHFFHPSLIPSLSLS.

This is an uncharacterized protein from Schizosaccharomyces pombe (strain 972 / ATCC 24843) (Fission yeast).